The chain runs to 693 residues: Polyribonucleotide nucleotidyltransferase (693 aa).

Mg(2+) is bound by residues aspartate 489 and aspartate 495. A KH domain is found at proline 556–isoleucine 615. Positions glycine 625 to arginine 693 constitute an S1 motif domain.

This sequence belongs to the polyribonucleotide nucleotidyltransferase family. In terms of assembly, component of the RNA degradosome, which is a multiprotein complex involved in RNA processing and mRNA degradation. Mg(2+) serves as cofactor.

It is found in the cytoplasm. The catalysed reaction is RNA(n+1) + phosphate = RNA(n) + a ribonucleoside 5'-diphosphate. Functionally, involved in mRNA degradation. Catalyzes the phosphorolysis of single-stranded polyribonucleotides processively in the 3'- to 5'-direction. The polypeptide is Polyribonucleotide nucleotidyltransferase (Francisella tularensis subsp. holarctica (strain OSU18)).